The following is a 123-amino-acid chain: Small ribosomal subunit protein uS13 (123 aa).

A disordered region spans residues 92-123 (RKGLPVRGQKTKTNARTRKGPKKLVGAKKKSK).

This sequence belongs to the universal ribosomal protein uS13 family. In terms of assembly, part of the 30S ribosomal subunit. Forms a loose heterodimer with protein S19. Forms two bridges to the 50S subunit in the 70S ribosome.

Located at the top of the head of the 30S subunit, it contacts several helices of the 16S rRNA. In the 70S ribosome it contacts the 23S rRNA (bridge B1a) and protein L5 of the 50S subunit (bridge B1b), connecting the 2 subunits; these bridges are implicated in subunit movement. Contacts the tRNAs in the A and P-sites. The chain is Small ribosomal subunit protein uS13 from Clostridium kluyveri (strain NBRC 12016).